The chain runs to 350 residues: Very-long-chain 3-oxoacyl-CoA reductase (350 aa).

A helical transmembrane segment spans residues 20 to 40 (ALLFSLLFGVFKLTTFTLRFA). NADP(+)-binding residues include Val-66, Asp-120, Asn-147, Tyr-221, Lys-225, Val-254, and Ser-256. Tyr-221 functions as the Proton donor in the catalytic mechanism. The Lowers pKa of active site Tyr role is filled by Lys-225.

Belongs to the short-chain dehydrogenases/reductases (SDR) family.

It is found in the endoplasmic reticulum membrane. The catalysed reaction is a very-long-chain (3R)-3-hydroxyacyl-CoA + NADP(+) = a very-long-chain 3-oxoacyl-CoA + NADPH + H(+). It functions in the pathway lipid metabolism; fatty acid biosynthesis. Component of the microsomal membrane bound fatty acid elongation system, which produces the 26-carbon very long-chain fatty acids (VLCFA) from palmitate. Catalyzes the reduction of the 3-ketoacyl-CoA intermediate that is formed in each cycle of fatty acid elongation. VLCFAs serve as precursors for ceramide and sphingolipids. This Lodderomyces elongisporus (strain ATCC 11503 / CBS 2605 / JCM 1781 / NBRC 1676 / NRRL YB-4239) (Yeast) protein is Very-long-chain 3-oxoacyl-CoA reductase.